A 323-amino-acid polypeptide reads, in one-letter code: Transcriptional regulator protein Pur-beta-A (323 aa).

Disordered stretches follow at residues 1-34, 100-122, and 286-323; these read MADGDSGSERGGSSGGPGGFSQHMSREQETQELA, SPEQIAQASGEDGAGGPGGPRRA, and QERQRDKMYERRGPGDRERSLGPGGGGDDSETEDVDDD. Ala2 is subject to N-acetylalanine. Residues 9–19 are compositionally biased toward gly residues; it reads ERGGSSGGPGG. Residues 24–34 show a composition bias toward basic and acidic residues; it reads MSREQETQELA. The tract at residues 27–257 is DNA-binding; it reads EQETQELATK…LRVSEVKPSY (231 aa). The segment covering 286-305 has biased composition (basic and acidic residues); sequence QERQRDKMYERRGPGDRERS. Over residues 313 to 323 the composition is skewed to acidic residues; the sequence is DDSETEDVDDD.

This sequence belongs to the PUR DNA-binding protein family.

Its subcellular location is the nucleus. Transcriptional regulator which can act as an activator or a repressor. The chain is Transcriptional regulator protein Pur-beta-A (purb-a) from Xenopus laevis (African clawed frog).